Reading from the N-terminus, the 158-residue chain is UPF0102 protein GbCGDNIH1_0975 (158 aa).

This sequence belongs to the UPF0102 family.

This Granulibacter bethesdensis (strain ATCC BAA-1260 / CGDNIH1) protein is UPF0102 protein GbCGDNIH1_0975.